We begin with the raw amino-acid sequence, 326 residues long: Ficolin-1 (326 aa).

An N-terminal signal peptide occupies residues 1–29 (MELSRVAVALGPTGQLLLFLSFQTLAAQA). Residues 55–93 (GLPGAAGPKGEAGANGPKGERGSPGVVGKAGPAGPKGDR) form the Collagen-like domain. Composition is skewed to low complexity over residues 61-71 (GPKGEAGANGP) and 78-89 (PGVVGKAGPAGP). The disordered stretch occupies residues 61-110 (GPKGEAGANGPKGERGSPGVVGKAGPAGPKGDRGEKGARGEKGEPGQLQS). Basic and acidic residues predominate over residues 90-104 (KGDRGEKGARGEKGE). The region spanning 109–326 (QSCATGPRTC…QVSEMKVRLT (218 aa)) is the Fibrinogen C-terminal domain. Disulfide bonds link cysteine 111–cysteine 139 and cysteine 118–cysteine 146. The interval 115–154 (PRTCKELLTRGHFLSGWHTIYLPDCQPLTVLCDMDTDGGG) is a domain; contributes to trimerization. A b domain; contributes to trimerization region spans residues 155-243 (WTVFQRRSDG…LVLGGFLEGN (89 aa)). Ca(2+) contacts are provided by aspartate 262 and aspartate 264. The N-linked (GlcNAc...) asparagine glycan is linked to asparagine 265. A disulfide bond links cysteine 270 and cysteine 283. 282 to 284 (ACH) contacts a carbohydrate. A glycan (N-linked (GlcNAc...) asparagine) is linked at asparagine 313. Residues 317 to 326 (QVSEMKVRLT) form a p domain region.

Belongs to the ficolin lectin family. As to quaternary structure, homotrimer. Interacts with elastin/ELN. Interacts (via Fibrinogen C-terminal domain) with FFAR2. Interacts with CRP; may regulate monocyte activation by FCN1. In terms of tissue distribution, most abundantly expressed in placenta and lung.

The protein resides in the secreted. It localises to the cell membrane. In terms of biological role, extracellular lectin functioning as a pattern-recognition receptor in innate immunity. Binds the sugar moieties of pathogen-associated molecular patterns (PAMPs) displayed on microbes and activates the lectin pathway of the complement system. May also activate monocytes through a G protein-coupled receptor, FFAR2, inducing the secretion of interleukin-8/IL-8. Binds preferentially to 9-O-acetylated 2-6-linked sialic acid derivatives and to various glycans containing sialic acid engaged in a 2-3 linkage. The protein is Ficolin-1 (FCN1) of Sus scrofa (Pig).